The primary structure comprises 4427 residues: Dynein axonemal heavy chain 2 (4427 aa).

A disordered region spans residues 1 to 73 (MSSKAEKKQR…AQSEESVEPE (73 aa)). Residues 1 to 1764 (MSSKAEKKQR…VIRQTNTQFQ (1764 aa)) are stem. The segment covering 14–23 (RGSSQASWSG) has biased composition (polar residues). The span at 50–59 (LPKEEPEPRL) shows a compositional bias: basic and acidic residues. The stretch at 1404 to 1439 (EDNQVALSTMKASRFVKAFEKDVDHWERCLSLILEV) is one TPR 1 repeat. AAA regions lie at residues 1765–1986 (YNYE…LLRY), 2046–2273 (ETVE…DNCK), 2378–2625 (RYPP…VFQG), and 2722–2974 (EYNL…LRRH). ATP contacts are provided by residues 1803 to 1810 (GPAGTGKT), 2084 to 2091 (GCTGSGKT), and 2416 to 2423 (GPVGTGKT). The TPR 2 repeat unit spans residues 2721–2754 (NEYNLSPSVVPMQLVLFREAIEHITRIVRVIGQP). 2762-2769 (GIGGSGRQ) is an ATP binding site. Residues 2989 to 3272 (YKKLLGEKRQ…EELRKKSEEM (284 aa)) form a stalk region. Residues 3012 to 3049 (FKIDETREKVQVMSLELEDAKKKVAEFQKQCEEYLVII) adopt a coiled-coil conformation. A TPR 3 repeat occupies 3072–3105 (VEEIKCQALADNAQKDLEEALPALEEAMRALESL). Coiled-coil stretches lie at residues 3216–3304 (KRIR…EEDL) and 3523–3567 (VRKE…GSLL). AAA regions lie at residues 3358–3588 (LCNP…EVTE) and 3804–4023 (VTSF…LLSL). TPR repeat units lie at residues 4072–4104 (STPF…LLPG) and 4105–4140 (MDPP…QPQI).

Belongs to the dynein heavy chain family. In terms of assembly, part of the axonemal inner dynein arm complex that consists of at least two heavy chains and a number of intermediate and light chains. Interacts with DNAI4. Expressed primarily in trachea and testis, 2 tissues containing axonemal structures. Also expressed in lung. Expressed in spermatozoa (at protein level).

It localises to the cytoplasm. It is found in the cytoskeleton. Its subcellular location is the cilium axoneme. The protein resides in the flagellum axoneme. Functionally, as part of the axonemal inner dynein arm complex plays a central role in ciliary beat. Expressed in sperm flagellum, it is required for sperm motility. Dyneins are microtubule-based molecular motors possessing ATPase activities that can convert the chemical energy of ATP into relative sliding between adjacent microtubule doublets to generate ciliary bending. In Homo sapiens (Human), this protein is Dynein axonemal heavy chain 2.